A 180-amino-acid chain; its full sequence is Large ribosomal subunit protein uL5 (180 aa).

This sequence belongs to the universal ribosomal protein uL5 family. As to quaternary structure, forms a bridge to the 30S subunit in the 70S ribosome. Part of the 50S ribosomal subunit; part of the 5S rRNA/L5/L18/L25 (CTC) subcomplex. Is known to contact the 5S rRNA, 23S rRNA and the P site tRNA.

In terms of biological role, this is one of the proteins that bind and probably mediate the attachment of the 5S RNA into the large ribosomal subunit, where it forms part of the central protuberance. In the 70S ribosome it contacts protein S13 of the 30S subunit (bridge B1b), connecting the 2 subunits; this bridge is implicated in subunit movement. Contacts the P site tRNA; the 5S rRNA and some of its associated proteins might help stabilize positioning of ribosome-bound tRNAs. The protein is Large ribosomal subunit protein uL5 (rplE) of Deinococcus radiodurans (strain ATCC 13939 / DSM 20539 / JCM 16871 / CCUG 27074 / LMG 4051 / NBRC 15346 / NCIMB 9279 / VKM B-1422 / R1).